The sequence spans 93 residues: MKPVLPLQFLVVFCLALQLVPGSPKQRVLKYILEPPPCISAPENCTHLCTMQEDCEKGFQCCSSFCGIVCSSETFQKRNRIKHKGSEVIMPAN.

An N-terminal signal peptide occupies residues 1 to 22 (MKPVLPLQFLVVFCLALQLVPG). The 50-residue stretch at 24–73 (PKQRVLKYILEPPPCISAPENCTHLCTMQEDCEKGFQCCSSFCGIVCSSE) folds into the WAP; atypical domain. Intrachain disulfides connect C45-C66, C49-C61, and C55-C70.

It localises to the secreted. Functionally, putative acid-stable proteinase inhibitor. In Homo sapiens (Human), this protein is WAP four-disulfide core domain protein 13 (WFDC13).